The chain runs to 338 residues: MQIYYDKDADLSIIQGKKVAIIGYGSQGHAHANNLKDSGVQVVVGLRPGSASAKKAENAGLAVASVEDAVKQADVIMILAPDEHQARLYNEQIAPNIKQGAALAFAHGFNIHFEQITPRADLDVIMIAPKGPGHLVRSTYTQGGGVPSLIAVYQNASGRAKELALSYASANGGGRAGIIETTFREETETDLFGEQAVLCGGATALVQAGFETLVEAGYAPEMAYFECLHELKLIVDLMYEGGIANMRYSISNTAEYGDLTRGPRIVTEQTKQEMKKILREIQTGEFAREFILENQAGAATLKAKRRLGREHLIESVGARLRDMMPWIKANRIVDTSKN.

The 181-residue stretch at M1–T181 folds into the KARI N-terminal Rossmann domain. NADP(+)-binding positions include Y24–Q27, R47, S50, S52, and D82–Q85. Residue H107 is part of the active site. NADP(+) is bound at residue G133. The 146-residue stretch at T182–I327 folds into the KARI C-terminal knotted domain. The Mg(2+) site is built by D190, E194, E226, and E230. S251 contributes to the substrate binding site.

It belongs to the ketol-acid reductoisomerase family. Mg(2+) serves as cofactor.

It catalyses the reaction (2R)-2,3-dihydroxy-3-methylbutanoate + NADP(+) = (2S)-2-acetolactate + NADPH + H(+). The enzyme catalyses (2R,3R)-2,3-dihydroxy-3-methylpentanoate + NADP(+) = (S)-2-ethyl-2-hydroxy-3-oxobutanoate + NADPH + H(+). It functions in the pathway amino-acid biosynthesis; L-isoleucine biosynthesis; L-isoleucine from 2-oxobutanoate: step 2/4. It participates in amino-acid biosynthesis; L-valine biosynthesis; L-valine from pyruvate: step 2/4. Involved in the biosynthesis of branched-chain amino acids (BCAA). Catalyzes an alkyl-migration followed by a ketol-acid reduction of (S)-2-acetolactate (S2AL) to yield (R)-2,3-dihydroxy-isovalerate. In the isomerase reaction, S2AL is rearranged via a Mg-dependent methyl migration to produce 3-hydroxy-3-methyl-2-ketobutyrate (HMKB). In the reductase reaction, this 2-ketoacid undergoes a metal-dependent reduction by NADPH to yield (R)-2,3-dihydroxy-isovalerate. The chain is Ketol-acid reductoisomerase (NADP(+)) from Methylococcus capsulatus (strain ATCC 33009 / NCIMB 11132 / Bath).